Here is an 873-residue protein sequence, read N- to C-terminus: Coatomer subunit gamma-2 (873 aa).

The segment covering 1–11 (MIKKFDKKDEE) has biased composition (basic and acidic residues). A disordered region spans residues 1 to 21 (MIKKFDKKDEESGSGSNPFQH). HEAT repeat units lie at residues 64 to 101 (TEAT…ISED), 283 to 320 (RELA…KHPS), 321 to 355 (AVTA…GSES), 356 to 392 (SVDR…KYPR), 395 to 430 (SVMM…ENPE), and 467 to 504 (PTPS…QNDD).

This sequence belongs to the COPG family. As to quaternary structure, oligomeric complex.

It is found in the cytoplasm. It localises to the golgi apparatus membrane. The protein resides in the cytoplasmic vesicle. Its subcellular location is the COPI-coated vesicle membrane. The coatomer is a cytosolic protein complex that binds to dilysine motifs and reversibly associates with Golgi non-clathrin-coated vesicles, which further mediate biosynthetic protein transport from the ER, via the Golgi up to the trans Golgi network. Coatomer complex is required for budding from Golgi membranes, and is essential for the retrograde Golgi-to-ER transport of dilysine-tagged proteins. This is Coatomer subunit gamma-2 (copg2) from Danio rerio (Zebrafish).